Here is a 216-residue protein sequence, read N- to C-terminus: Protein-methionine-sulfoxide reductase heme-binding subunit MsrQ (216 aa).

Transmembrane regions (helical) follow at residues 16 to 36 (IWAL…LGAT), 48 to 68 (EHLL…ITPI), 82 to 102 (ALGL…MVLD), 119 to 139 (FITI…TSNI), and 155 to 175 (LVYV…KVVG).

This sequence belongs to the MsrQ family. In terms of assembly, heterodimer of a catalytic subunit (MsrP) and a heme-binding subunit (MsrQ). Requires FMN as cofactor. The cofactor is heme b.

It localises to the cell inner membrane. Functionally, part of the MsrPQ system that repairs oxidized periplasmic proteins containing methionine sulfoxide residues (Met-O), using respiratory chain electrons. Thus protects these proteins from oxidative-stress damage caused by reactive species of oxygen and chlorine generated by the host defense mechanisms. MsrPQ is essential for the maintenance of envelope integrity under bleach stress, rescuing a wide series of structurally unrelated periplasmic proteins from methionine oxidation. MsrQ provides electrons for reduction to the reductase catalytic subunit MsrP, using the quinone pool of the respiratory chain. The protein is Protein-methionine-sulfoxide reductase heme-binding subunit MsrQ of Rhizobium meliloti (strain 1021) (Ensifer meliloti).